The primary structure comprises 164 residues: R-phycoerythrin alpha chain (164 aa).

2 residues coordinate (2R,3E)-phycoerythrobilin: Cys-82 and Cys-139.

It belongs to the phycobiliprotein family. Heterodimer of an alpha and a beta chain. Contains two covalently linked bilin chromophores.

The protein localises to the plastid. It localises to the chloroplast thylakoid membrane. Functionally, light-harvesting photosynthetic bile pigment-protein from the phycobiliprotein complex. This Pyropia haitanensis (Red seaweed) protein is R-phycoerythrin alpha chain (cpeA).